The primary structure comprises 181 residues: Transcriptional repressor NrdR (181 aa).

Residues 3–34 fold into a zinc finger; sequence CPFCRHPDSRVVDSREAEEGSAIRRRRSCLSC. The region spanning 46 to 136 is the ATP-cone domain; the sequence is LQVRKRSGAA…VYLAFESLTD (91 aa). Residues 148 to 181 are disordered; the sequence is AAGPPTTRDGPARPVPRGAVDVSPVIGTQQVHSR.

The protein belongs to the NrdR family. Requires Zn(2+) as cofactor.

Negatively regulates transcription of bacterial ribonucleotide reductase nrd genes and operons by binding to NrdR-boxes. In Frankia casuarinae (strain DSM 45818 / CECT 9043 / HFP020203 / CcI3), this protein is Transcriptional repressor NrdR.